The primary structure comprises 192 residues: MAAMAALQSSFTSLSLSSNSFLGQRLFPSPTTLQVKTEGHSPCLIVMRIKRWERKDCKPNSLPKLHKMHVKVGDTVKVISGGEKGKIGEISKIHKHNSTVIIKDLNLKTKHVKSKEEGEQGQIIKIEAAIHSSNVMLYSKEQEVASRVGHKILEDGRKVRYLIKTGEIVDTPDRWKEIQNKKESETAVAVAA.

The transit peptide at 1–47 directs the protein to the chloroplast; that stretch reads MAAMAALQSSFTSLSLSSNSFLGQRLFPSPTTLQVKTEGHSPCLIVM.

As to quaternary structure, component of the chloroplast large ribosomal subunit (LSU). Mature 70S chloroplast ribosomes of higher plants consist of a small (30S) and a large (50S) subunit. The 30S small subunit contains 1 molecule of ribosomal RNA (16S rRNA) and 24 different proteins. The 50S large subunit contains 3 rRNA molecules (23S, 5S and 4.5S rRNA) and 33 different proteins.

The protein localises to the plastid. It is found in the chloroplast. Its function is as follows. Component of the chloroplast ribosome (chloro-ribosome), a dedicated translation machinery responsible for the synthesis of chloroplast genome-encoded proteins, including proteins of the transcription and translation machinery and components of the photosynthetic apparatus. In Spinacia oleracea (Spinach), this protein is Large ribosomal subunit protein uL24c (RPL24).